Consider the following 509-residue polypeptide: CDK5RAP3 protein homolog (509 aa).

It belongs to the CDK5RAP3 family.

The protein localises to the nucleus. Its subcellular location is the cytoplasm. In terms of biological role, substrate adapter of E3 ligase complexes mediating ufmylation, the covalent attachment of the ubiquitin-like modifier UFM1 to substrate proteins, and which is involved in various processes, such as ribosome recycling and reticulophagy (also called ER-phagy). In Drosophila melanogaster (Fruit fly), this protein is CDK5RAP3 protein homolog.